The sequence spans 516 residues: Putative GTP-binding protein 6 (516 aa).

The span at 18–39 shows a compositional bias: low complexity; that stretch reads GRGRSAPRAAAPSCPARALAAV. The disordered stretch occupies residues 18 to 82; the sequence is GRGRSAPRAA…PEDADENAEE (65 aa). Residues 57-67 show a composition bias toward basic and acidic residues; sequence LRADGGRSRTG. The segment covering 68–82 has biased composition (acidic residues); it reads DDEEEPEDADENAEE. A Hflx-type G domain is found at 295-459; sequence PVISVVGYTN…ELDAAVLKAT (165 aa). GTP-binding positions include 301 to 308, 327 to 331, 349 to 352, 418 to 421, and 437 to 439; these read GYTNCGKT, FATLD, DTIG, NKVD, and SAL. Residues T308 and T329 each contribute to the Mg(2+) site.

The protein belongs to the TRAFAC class OBG-HflX-like GTPase superfamily. HflX GTPase family. It depends on Mg(2+) as a cofactor. As to expression, ubiquitously expressed.

This Homo sapiens (Human) protein is Putative GTP-binding protein 6 (GTPBP6).